A 505-amino-acid chain; its full sequence is AAA-ATPase At5g17760 (505 aa).

Residues 11 to 27 (TSVFTAYASMAGYMMMI) traverse the membrane as a helical segment. The disordered stretch occupies residues 136–155 (GGGGGVGGRGGGGGRRGGMD). Gly residues predominate over residues 137 to 151 (GGGGVGGRGGGGGRR). 260–267 (GPPGTGKS) contributes to the ATP binding site.

This sequence belongs to the AAA ATPase family. BCS1 subfamily. Mg(2+) serves as cofactor.

The protein localises to the membrane. It catalyses the reaction ATP + H2O = ADP + phosphate + H(+). This Arabidopsis thaliana (Mouse-ear cress) protein is AAA-ATPase At5g17760.